Reading from the N-terminus, the 495-residue chain is Pre-glycoprotein polyprotein GP complex (495 aa).

Glycine 2 is lipidated: N-myristoyl glycine; by host. At 2–17 (GQFISFMQEIPIFLQE) the chain is on the extracellular side. Residues 18–33 (ALNIALVAVSLICIVK) traverse the membrane as a helical segment. Residues 34–58 (GLVNLYRCGLFQLMVFLVLAGRSCS) lie on the Cytoplasmic side of the membrane. Residue cysteine 57 coordinates Zn(2+). The Extracellular segment spans residues 59 to 434 (EETFKIGMHT…QGRTPITLVD (376 aa)). 4 disulfide bridges follow: cysteine 92/cysteine 236, cysteine 281/cysteine 294, cysteine 303/cysteine 312, and cysteine 366/cysteine 387. Asparagine 95 and asparagine 188 each carry an N-linked (GlcNAc...) asparagine; by host glycan. Asparagine 367, asparagine 375, asparagine 392, and asparagine 397 each carry an N-linked (GlcNAc...) asparagine; by host glycan. The helical transmembrane segment at 435–455 (ICFWSTVFFTSTLFLHLIGFP) threads the bilayer. Residues 456–495 (THEHIRGEGCPLPHRLNSMGGCRCGKYLPLKKPTIWHRRH) are Cytoplasmic-facing. Positions 457, 459, 465, 469, 477, 479, and 495 each coordinate Zn(2+).

It belongs to the arenaviridae GPC protein family. Interacts with glycoprotein G2. Part of the GP complex (GP-C) together with glycoprotein G1 and glycoprotein G2. The GP-complex interacts with protein Z, which interacts with ribonucleocapsid; these interactions may induce virion budding. In terms of assembly, homotrimer; disulfide-linked. In pre-fusion state, G1 homotrimers bind G2 homotrimers via ionic interactions. Part of the GP complex (GP-C) together with glycoprotein G2 and the stable signal peptide. The GP-complex interacts with protein Z, which interacts with ribonucleocapsid; these interactions may induce virion budding. As to quaternary structure, homotrimer. Interacts with the stable signal peptide. In pre-fusion state, G2 homotrimers bind G1 homotrimers via ionic interactions. Part of the GP complex (GP-C) together with glycoprotein G1 and the stable signal peptide. Acidification in the endosome triggers rearrangements, which ultimately leads to a 6 helix bundle formed by the two heptad repeat domains (HR1 and HR2) in post-fusion state. The GP-complex interacts with protein Z, which interacts with ribonucleocapsid; these interactions may induce virion budding. In terms of processing, specific enzymatic cleavages in vivo yield mature proteins. GP-C polyprotein is cleaved in the endoplasmic reticulum by the host protease MBTPS1. Only cleaved glycoprotein is incorporated into virions. The SSP remains stably associated with the GP complex following cleavage by signal peptidase and plays crucial roles in the trafficking of GP through the secretory pathway. Post-translationally, myristoylation is necessary for GP2-mediated fusion activity.

It localises to the virion membrane. Its subcellular location is the host endoplasmic reticulum membrane. It is found in the host Golgi apparatus membrane. The protein localises to the host cell membrane. Functionally, functions as a cleaved signal peptide that is retained as the third component of the GP complex (GP-C). Helps to stabilize the spike complex in its native conformation. The SSP is required for efficient glycoprotein expression, post-translational maturation cleavage of G1 and G2, glycoprotein transport to the cell surface plasma membrane, formation of infectious virus particles, and acid pH-dependent glycoprotein-mediated cell fusion. Forms the virion spikes together with glycoprotein G2. The glycoprotein spike trimers are connected to the underlying matrix. Interacts with the host receptor leading to virus endocytosis. Its function is as follows. Forms the virion spikes together with glycoprotein G1. The glycoprotein spike trimers are connected to the underlying matrix. Class I viral fusion protein that directs fusion of viral and host endosomal membranes, leading to delivery of the nucleocapsid into the cytoplasm. Membrane fusion is mediated by irreversible conformational changes induced by acidification. This is Pre-glycoprotein polyprotein GP complex from Tacaribe virus (strain Franze-Fernandez) (TCRV).